A 402-amino-acid chain; its full sequence is CCA-adding enzyme (402 aa).

2 residues coordinate ATP: Gly32 and Arg35. Residues Gly32 and Arg35 each coordinate CTP. Mg(2+)-binding residues include Asp45 and Asp47. ATP contacts are provided by Arg116, Asp159, Arg162, Arg165, and Arg168. The CTP site is built by Arg116, Asp159, Arg162, Arg165, and Arg168.

Belongs to the tRNA nucleotidyltransferase/poly(A) polymerase family. Bacterial CCA-adding enzyme type 3 subfamily. Homodimer. The cofactor is Mg(2+).

The catalysed reaction is a tRNA precursor + 2 CTP + ATP = a tRNA with a 3' CCA end + 3 diphosphate. The enzyme catalyses a tRNA with a 3' CCA end + 2 CTP + ATP = a tRNA with a 3' CCACCA end + 3 diphosphate. Functionally, catalyzes the addition and repair of the essential 3'-terminal CCA sequence in tRNAs without using a nucleic acid template. Adds these three nucleotides in the order of C, C, and A to the tRNA nucleotide-73, using CTP and ATP as substrates and producing inorganic pyrophosphate. tRNA 3'-terminal CCA addition is required both for tRNA processing and repair. Also involved in tRNA surveillance by mediating tandem CCA addition to generate a CCACCA at the 3' terminus of unstable tRNAs. While stable tRNAs receive only 3'-terminal CCA, unstable tRNAs are marked with CCACCA and rapidly degraded. The chain is CCA-adding enzyme from Streptococcus pyogenes serotype M6 (strain ATCC BAA-946 / MGAS10394).